The primary structure comprises 103 residues: Large ribosomal subunit protein bL21 (103 aa).

Belongs to the bacterial ribosomal protein bL21 family. In terms of assembly, part of the 50S ribosomal subunit. Contacts protein L20.

In terms of biological role, this protein binds to 23S rRNA in the presence of protein L20. This Bordetella parapertussis (strain 12822 / ATCC BAA-587 / NCTC 13253) protein is Large ribosomal subunit protein bL21.